We begin with the raw amino-acid sequence, 203 residues long: Thymidylate kinase (203 aa).

An ATP-binding site is contributed by 14-21 (GGEGIGKS).

This sequence belongs to the thymidylate kinase family.

The catalysed reaction is dTMP + ATP = dTDP + ADP. Functionally, phosphorylation of dTMP to form dTDP in both de novo and salvage pathways of dTTP synthesis. This Rickettsia peacockii (strain Rustic) protein is Thymidylate kinase.